Reading from the N-terminus, the 100-residue chain is Urease subunit gamma (100 aa).

This sequence belongs to the urease gamma subunit family. In terms of assembly, heterotrimer of UreA (gamma), UreB (beta) and UreC (alpha) subunits. Three heterotrimers associate to form the active enzyme.

Its subcellular location is the cytoplasm. It carries out the reaction urea + 2 H2O + H(+) = hydrogencarbonate + 2 NH4(+). It functions in the pathway nitrogen metabolism; urea degradation; CO(2) and NH(3) from urea (urease route): step 1/1. This is Urease subunit gamma from Marinomonas sp. (strain MWYL1).